Reading from the N-terminus, the 561-residue chain is Potassium-transporting ATPase potassium-binding subunit (561 aa).

The next 12 helical transmembrane spans lie at 2-22, 65-85, 135-155, 177-197, 253-273, 280-300, 327-347, 353-373, 378-398, 413-433, 482-502, and 531-551; these read GLGL…TPVL, YIRA…SLIH, ALGF…IAFI, ILLP…VPQT, FIET…YGVF, AWLL…VAAT, FGWA…CGAV, ALMP…IIWG, GTAY…LMVG, IVLA…PSAI, LSTS…MLLL, and AGIV…LGPI.

The protein belongs to the KdpA family. In terms of assembly, the system is composed of three essential subunits: KdpA, KdpB and KdpC.

It localises to the cell membrane. Part of the high-affinity ATP-driven potassium transport (or Kdp) system, which catalyzes the hydrolysis of ATP coupled with the electrogenic transport of potassium into the cytoplasm. This subunit binds the extracellular potassium ions and delivers the ions to the membrane domain of KdpB through an intramembrane tunnel. In Anabaena sp. (strain L31), this protein is Potassium-transporting ATPase potassium-binding subunit.